A 209-amino-acid polypeptide reads, in one-letter code: Imidazole glycerol phosphate synthase subunit HisH (209 aa).

In terms of domain architecture, Glutamine amidotransferase type-1 spans 3 to 209 (KIAIIDYGMG…SILKNFGEMK (207 aa)). Residue Cys81 is the Nucleophile of the active site. Catalysis depends on residues His190 and Glu192.

As to quaternary structure, heterodimer of HisH and HisF.

It is found in the cytoplasm. The enzyme catalyses 5-[(5-phospho-1-deoxy-D-ribulos-1-ylimino)methylamino]-1-(5-phospho-beta-D-ribosyl)imidazole-4-carboxamide + L-glutamine = D-erythro-1-(imidazol-4-yl)glycerol 3-phosphate + 5-amino-1-(5-phospho-beta-D-ribosyl)imidazole-4-carboxamide + L-glutamate + H(+). It catalyses the reaction L-glutamine + H2O = L-glutamate + NH4(+). Its pathway is amino-acid biosynthesis; L-histidine biosynthesis; L-histidine from 5-phospho-alpha-D-ribose 1-diphosphate: step 5/9. Functionally, IGPS catalyzes the conversion of PRFAR and glutamine to IGP, AICAR and glutamate. The HisH subunit catalyzes the hydrolysis of glutamine to glutamate and ammonia as part of the synthesis of IGP and AICAR. The resulting ammonia molecule is channeled to the active site of HisF. The polypeptide is Imidazole glycerol phosphate synthase subunit HisH (Geobacter sulfurreducens (strain ATCC 51573 / DSM 12127 / PCA)).